A 170-amino-acid chain; its full sequence is UPF0260 protein RPC_1790 (170 aa).

It belongs to the UPF0260 family.

The chain is UPF0260 protein RPC_1790 from Rhodopseudomonas palustris (strain BisB18).